The sequence spans 801 residues: Phenylalanine--tRNA ligase beta subunit (801 aa).

The 109-residue stretch at 39–147 (GGGLDEVVVA…TDLPLGVPVF (109 aa)) folds into the tRNA-binding domain. The region spanning 401–477 (LPRRTVRFRV…RLNGYNNIPV (77 aa)) is the B5 domain. 4 residues coordinate Mg(2+): Asp-455, Asp-461, Glu-464, and Glu-465. The FDX-ACB domain maps to 708–801 (SRFPDTFRDI…LVKKLAVTIR (94 aa)).

It belongs to the phenylalanyl-tRNA synthetase beta subunit family. Type 1 subfamily. In terms of assembly, tetramer of two alpha and two beta subunits. Mg(2+) serves as cofactor.

The protein resides in the cytoplasm. It catalyses the reaction tRNA(Phe) + L-phenylalanine + ATP = L-phenylalanyl-tRNA(Phe) + AMP + diphosphate + H(+). This chain is Phenylalanine--tRNA ligase beta subunit, found in Geobacter metallireducens (strain ATCC 53774 / DSM 7210 / GS-15).